We begin with the raw amino-acid sequence, 1400 residues long: DNA-directed RNA polymerase subunit beta' (1400 aa).

Cys71, Cys73, Cys86, and Cys89 together coordinate Zn(2+). Mg(2+) contacts are provided by Asp462, Asp464, and Asp466. Residues Cys820, Cys893, Cys900, and Cys903 each coordinate Zn(2+).

This sequence belongs to the RNA polymerase beta' chain family. As to quaternary structure, the RNAP catalytic core consists of 2 alpha, 1 beta, 1 beta' and 1 omega subunit. When a sigma factor is associated with the core the holoenzyme is formed, which can initiate transcription. Requires Mg(2+) as cofactor. It depends on Zn(2+) as a cofactor.

It catalyses the reaction RNA(n) + a ribonucleoside 5'-triphosphate = RNA(n+1) + diphosphate. DNA-dependent RNA polymerase catalyzes the transcription of DNA into RNA using the four ribonucleoside triphosphates as substrates. This chain is DNA-directed RNA polymerase subunit beta', found in Methylobacterium sp. (strain 4-46).